The primary structure comprises 430 residues: von Willebrand factor (430 aa).

Asn-6 carries N-linked (GlcNAc...) asparagine glycosylation. A disulfide bridge connects residues Cys-9 and Cys-12. O-linked (GalNAc...) threonine glycosylation is found at Thr-23, Thr-30, and Thr-31. A disulfide bond links Cys-47 and Cys-233. The VWFA 1; binding site for platelet glycoprotein Ib domain maps to 52–228; it reads DLVFLLDGSY…DELEQRRDEI (177 aa). A glycan (O-linked (GalNAc...) threonine) is linked at Thr-252. Ser-261 carries an O-linked (GalNAc...) serine glycan. The region spanning 273–430 is the VWFA 2 domain; it reads DVVFVLEASD…ITPIFIQDFE (158 aa). 2 N-linked (GlcNAc...) asparagine glycosylation sites follow: Asn-290 and Asn-349.

As to quaternary structure, multimeric. Interacts with F8. N- and O-glycosylated. In terms of tissue distribution, plasma.

The protein localises to the secreted. It is found in the extracellular space. It localises to the extracellular matrix. Important in the maintenance of hemostasis, it promotes adhesion of platelets to the sites of vascular injury by forming a molecular bridge between sub-endothelial collagen matrix and platelet-surface receptor complex GPIb-IX-V. Also acts as a chaperone for coagulation factor VIII, delivering it to the site of injury, stabilizing its heterodimeric structure and protecting it from premature clearance from plasma. In Rattus norvegicus (Rat), this protein is von Willebrand factor.